Consider the following 156-residue polypeptide: Small ribosomal subunit protein uS7 (156 aa).

It belongs to the universal ribosomal protein uS7 family. As to quaternary structure, part of the 30S ribosomal subunit. Contacts proteins S9 and S11.

One of the primary rRNA binding proteins, it binds directly to 16S rRNA where it nucleates assembly of the head domain of the 30S subunit. Is located at the subunit interface close to the decoding center, probably blocks exit of the E-site tRNA. The polypeptide is Small ribosomal subunit protein uS7 (Methylobacterium radiotolerans (strain ATCC 27329 / DSM 1819 / JCM 2831 / NBRC 15690 / NCIMB 10815 / 0-1)).